Consider the following 505-residue polypeptide: Prenylcysteine oxidase 1 (505 aa).

An N-terminal signal peptide occupies residues 1 to 27; that stretch reads MGRVVAELVSSLLGLWLLLCSCGCPEG. 3 N-linked (GlcNAc...) asparagine glycosylation sites follow: Asn196, Asn323, and Asn353.

Belongs to the prenylcysteine oxidase family. It depends on FAD as a cofactor.

It localises to the lysosome. The catalysed reaction is an S-polyprenyl-L-cysteine + O2 + H2O = a polyprenal + L-cysteine + H2O2. The enzyme catalyses S-(2E,6E)-farnesyl-L-cysteine + O2 + H2O = (2E,6E)-farnesal + L-cysteine + H2O2. It carries out the reaction [(2E,6E,10E)-geranylgeranyl]-L-cysteine + O2 + H2O = (2E,6E,10E)-geranylgeranial + L-cysteine + H2O2. Functionally, prenylcysteine oxidase that cleaves the thioether bond of prenyl-L-cysteines, such as farnesylcysteine and geranylgeranylcysteine. Only active against free prenylcysteines and not prenylcysteine residues within prenylated proteins or peptides. Involved in the final step in the degradation of prenylated proteins, by degrading prenylcysteines after the protein has been degraded. This Pongo abelii (Sumatran orangutan) protein is Prenylcysteine oxidase 1.